The sequence spans 787 residues: Integrin beta-6 (787 aa).

The first 21 residues, 1 to 21 (MGIELVCLFLLLLGRNDHVQG), serve as a signal peptide directing secretion. In terms of domain architecture, PSI spans 22-71 (GCAWSGAETCSDCLLTGPHCAWCSQENFTHLSGAGERCDTPENLLAKGCQ). At 22-708 (GCAWSGAETC…KDCPKPPNIP (687 aa)) the chain is on the extracellular side. Disulfide bonds link cysteine 23-cysteine 41, cysteine 31-cysteine 454, cysteine 34-cysteine 59, cysteine 44-cysteine 70, cysteine 197-cysteine 204, cysteine 252-cysteine 293, cysteine 394-cysteine 406, cysteine 426-cysteine 452, cysteine 456-cysteine 476, cysteine 467-cysteine 479, cysteine 481-cysteine 490, cysteine 492-cysteine 519, cysteine 502-cysteine 517, cysteine 511-cysteine 522, cysteine 524-cysteine 537, cysteine 539-cysteine 560, cysteine 544-cysteine 558, cysteine 552-cysteine 563, and cysteine 565-cysteine 574. N-linked (GlcNAc...) asparagine glycans are attached at residues asparagine 48 and asparagine 97. Residues 131 to 371 (YPVDLYYLMD…QLIISAYEEL (241 aa)) enclose the VWFA domain. Positions 140, 142, and 144 each coordinate Mg(2+). Residues serine 144, aspartate 147, aspartate 148, and glutamate 179 each coordinate Ca(2+). The Ca(2+) site is built by asparagine 235, aspartate 237, proline 239, and glutamate 240. Mg(2+) is bound at residue glutamate 240. Asparagine 260 is a glycosylation site (N-linked (GlcNAc...) asparagine). Residues aspartate 271 and lysine 355 each coordinate Ca(2+). Asparagine 387 is a glycosylation site (N-linked (GlcNAc...) asparagine). An N-linked (GlcNAc...) asparagine glycan is attached at asparagine 418. I-EGF domains follow at residues 456–491 (CQREVEANSSKCHHGNGSFQCGVCACNPGHMGPRCE), 492–538 (CGED…PYCQ), 539–575 (CDNFSCLRHKGLLCGDNGDCDCGECVCRDGWTGEYCN), and 576–615 (CTTSRDACASEDGVLCSGRGDCVCGKCVCRNPGASGPTCE). N-linked (GlcNAc...) asparagine glycosylation is found at asparagine 463 and asparagine 471. Asparagine 541 is a glycosylation site (N-linked (GlcNAc...) asparagine). Residue asparagine 575 is glycosylated (N-linked (GlcNAc...) asparagine). Cystine bridges form between cysteine 576/cysteine 599, cysteine 583/cysteine 597, cysteine 591/cysteine 602, cysteine 604/cysteine 614, cysteine 617/cysteine 620, cysteine 624/cysteine 669, cysteine 630/cysteine 649, cysteine 633/cysteine 645, and cysteine 677/cysteine 701. N-linked (GlcNAc...) asparagine glycosylation occurs at asparagine 695. The chain crosses the membrane as a helical span at residues 709-729 (MIMLGVSLAILLIGVVLLCIW). An interaction with HAX1 region spans residues 730 to 757 (KLLVSFHDRKEVAKFEAERSKAKWQTGT). Over 730-787 (KLLVSFHDRKEVAKFEAERSKAKWQTGTNPLYRGSTSTFKNVTYKHREKHKVGLSSDG) the chain is Cytoplasmic.

Belongs to the integrin beta chain family. As to quaternary structure, heterodimer of an alpha and a beta subunit. Interacts with FLNB. Interacts with HAX1. ITGAV:ITGB6 interacts with FBN1. ITGAV:ITGB6 interacts with TGFB1.

Its subcellular location is the cell membrane. It is found in the cell junction. It localises to the focal adhesion. Functionally, integrin alpha-V:beta-6 (ITGAV:ITGB6) is a receptor for fibronectin and cytotactin. It recognizes the sequence R-G-D in its ligands. ITGAV:ITGB6 acts as a receptor for fibrillin-1 (FBN1) and mediates R-G-D-dependent cell adhesion to FBN1. Integrin alpha-V:beta-6 (ITGAV:ITGB6) mediates R-G-D-dependent release of transforming growth factor beta-1 (TGF-beta-1) from regulatory Latency-associated peptide (LAP), thereby playing a key role in TGF-beta-1 activation. This Rattus norvegicus (Rat) protein is Integrin beta-6 (Itgb6).